Reading from the N-terminus, the 578-residue chain is MSAPRAEEQPSRSGERQPLVARGPRGPRRWRRTAAAAVLLVQMLERAAFFGVTSNLVLYLNSLNFNWDGQQASRATLLFLGASYLLAPVGGWLADVYLGRFLTISLSLLLYLAASGLLLTTITNDGRRSFCGEMPELPLEPACPSSSCQGSWSSPYCATTLYLVLLLLALAASSVRSTLTSFGADQVMDLGRDATRRFFNWFYWSINLGAILSLLVVAFIEQNISFLWGYSIIVGLVGLAFFIFLFATPVFITKPPTGSQVSSMLKLAFQNCCPCRRSSSRDSESAHLLPDQRSNQPGPSPQEDMANFQVLVKILPVMVTLVPYWMVYFQMQSTYVLQGLHLHIPNIFRTNPNISLLLRSDSSNYRIPEAWLLLANVAVILILIPVKDHLIDPLLLRCKLLPSSLQKMALGMFFGFTSIIVAGVLEKERLQYIAANQTVPQLIGKDLYYAAPLSIWWQIPQYLLIGVSEIFASIPGLEFAYSEAPRSMQGAIMGIFFCLSGVGSLLGSGLVALLSFPGGWMYCPKDFGNINNCQMDRYFFLLAGIEAVTAVLFLWIAGRYERTRQDPASQRSSSRVRG.

The segment covering 1–15 (MSAPRAEEQPSRSGE) has biased composition (basic and acidic residues). Residues 1 to 27 (MSAPRAEEQPSRSGERQPLVARGPRGP) are disordered. 5 helical membrane-spanning segments follow: residues 33-53 (TAAA…FGVT), 77-97 (LLFL…ADVY), 102-122 (LTIS…LTTI), 155-175 (PYCA…ASSV), and 201-221 (WFYW…AFIE). Asn-223 carries an N-linked (GlcNAc...) asparagine glycan. A helical membrane pass occupies residues 232 to 252 (IIVGLVGLAFFIFLFATPVFI). Residues 280–301 (SRDSESAHLLPDQRSNQPGPSP) are disordered. A helical transmembrane segment spans residues 308 to 328 (FQVLVKILPVMVTLVPYWMVY). Residue Asn-353 is glycosylated (N-linked (GlcNAc...) asparagine). The next 2 membrane-spanning stretches (helical) occupy residues 367–387 (IPEA…IPVK) and 405–425 (LQKM…AGVL). N-linked (GlcNAc...) asparagine glycosylation occurs at Asn-436. 3 helical membrane-spanning segments follow: residues 462–481 (YLLI…EFAY), 494–514 (GIFF…VALL), and 538–558 (YFFL…WIAG).

It belongs to the major facilitator superfamily. Proton-dependent oligopeptide transporter (POT/PTR) (TC 2.A.17) family. In terms of tissue distribution, expressed highly in bone marrow derived macrophages, and weakly in spleen and lung. Expressed in plasmacytoid dendritic cells (pDCs) in response to toll-like receptors (TLR) stimulation.

Its subcellular location is the lysosome membrane. The protein localises to the endosome membrane. The enzyme catalyses N-acetyl-D-muramoyl-L-alanyl-D-isoglutamine(out) + n H(+)(out) = N-acetyl-D-muramoyl-L-alanyl-D-isoglutamine(in) + n H(+)(in). It catalyses the reaction glycylglycylglycine(out) + n H(+)(out) = glycylglycylglycine(in) + n H(+)(in). It carries out the reaction carnosine(out) + n H(+)(out) = carnosine(in) + n H(+)(in). The catalysed reaction is L-histidine(out) + n H(+)(out) = L-histidine(in) + n H(+)(in). Functionally, proton-coupled amino-acid transporter that transports free histidine and certain di- and tripeptides, and is involved in innate immune response. Also able to transport carnosine. Involved in the detection of microbial pathogens by toll-like receptors (TLRs) and NOD-like receptors (NLRs), probably by mediating transport of bacterial peptidoglycans across the endolysosomal membrane: catalyzes the transport of certain bacterial peptidoglycans, such as muramyl dipeptide (MDP), the NOD2 ligand. The polypeptide is Solute carrier family 15 member 3 (Mus musculus (Mouse)).